Consider the following 488-residue polypeptide: Glutamate--tRNA ligase (488 aa).

The 'HIGH' region signature appears at 8–18; that stretch reads PSPTGPLHIGG. Residues cysteine 105, cysteine 107, cysteine 132, and histidine 134 each contribute to the Zn(2+) site. A 'KMSKS' region motif is present at residues 249 to 253; the sequence is KMSKR. Residue lysine 252 participates in ATP binding.

This sequence belongs to the class-I aminoacyl-tRNA synthetase family. Glutamate--tRNA ligase type 1 subfamily. Monomer. Requires Zn(2+) as cofactor.

The protein resides in the cytoplasm. It carries out the reaction tRNA(Glu) + L-glutamate + ATP = L-glutamyl-tRNA(Glu) + AMP + diphosphate. Functionally, catalyzes the attachment of glutamate to tRNA(Glu) in a two-step reaction: glutamate is first activated by ATP to form Glu-AMP and then transferred to the acceptor end of tRNA(Glu). The sequence is that of Glutamate--tRNA ligase from Desulfitobacterium hafniense (strain Y51).